We begin with the raw amino-acid sequence, 432 residues long: Trigger factor (432 aa).

Residues 161-246 (DDRVTIDFVG…LKKIENMVLP (86 aa)) enclose the PPIase FKBP-type domain.

This sequence belongs to the FKBP-type PPIase family. Tig subfamily.

The protein resides in the cytoplasm. The enzyme catalyses [protein]-peptidylproline (omega=180) = [protein]-peptidylproline (omega=0). In terms of biological role, involved in protein export. Acts as a chaperone by maintaining the newly synthesized protein in an open conformation. Functions as a peptidyl-prolyl cis-trans isomerase. The polypeptide is Trigger factor (Haemophilus influenzae (strain 86-028NP)).